The sequence spans 331 residues: MSEIQSLTERALADVAAAQTPDQLEALRVALLGKSGSITAQLKQLGTLPAEQRKAAGEAINLSRDALTAALAERKHTLETAALDARLAGERIDVTLPGRRSERGGLHPVTRTLERIVEIFARLGYELSDGPEIEDDWHNFEALNFPPHHPARAMHDTFYFGDGRLLRTHTSGVQVRYMDAHKPPLRMIAAGKVYRSDSDQTHSPMFHQVEGLLVDEHSNFADLKGTLSEFVRAFFERDFEMRFRPSYFPFVEPGAEVDIAWQQPDGSTRWLEVLGCGMVHPNVLRSVGIDPERYTGFAFGLGVERFAMLRYGVNDLRAFFENDVRFLRQFA.

E252 serves as a coordination point for Mg(2+).

It belongs to the class-II aminoacyl-tRNA synthetase family. Phe-tRNA synthetase alpha subunit type 1 subfamily. Tetramer of two alpha and two beta subunits. Mg(2+) serves as cofactor.

It localises to the cytoplasm. It carries out the reaction tRNA(Phe) + L-phenylalanine + ATP = L-phenylalanyl-tRNA(Phe) + AMP + diphosphate + H(+). This chain is Phenylalanine--tRNA ligase alpha subunit, found in Xanthomonas euvesicatoria pv. vesicatoria (strain 85-10) (Xanthomonas campestris pv. vesicatoria).